A 300-amino-acid chain; its full sequence is Cation-efflux pump FieF (300 aa).

4 helical membrane passes run 12-32 (AALSATVLASILLIIKIFAWW), 40-60 (LAALVDSLVDLAASLTNLFVV), 82-102 (AALAQSMFISGSALFLFLTGF), and 114-134 (PGLGIWVTLIALFSTLILVTF). Residues Asp-45 and Asp-49 each contribute to the Zn(2+) site. The Zn(2+) site is built by His-153 and Asp-157. The chain crosses the membrane as a helical span at residues 164-184 (ILIALALSWYGFHRADALFAL).

It belongs to the cation diffusion facilitator (CDF) transporter (TC 2.A.4) family. FieF subfamily. As to quaternary structure, homodimer.

The protein resides in the cell inner membrane. It catalyses the reaction Zn(2+)(in) + H(+)(out) = Zn(2+)(out) + H(+)(in). The catalysed reaction is Cd(2+)(in) + H(+)(out) = Cd(2+)(out) + H(+)(in). The enzyme catalyses Fe(2+)(in) + H(+)(out) = Fe(2+)(out) + H(+)(in). Functionally, divalent metal cation transporter which exports Zn(2+), Cd(2+) and possibly Fe(2+). May be involved in zinc and iron detoxification by efflux. The sequence is that of Cation-efflux pump FieF from Yersinia enterocolitica serotype O:8 / biotype 1B (strain NCTC 13174 / 8081).